Here is a 453-residue protein sequence, read N- to C-terminus: Bifunctional protein GlmU (453 aa).

A pyrophosphorylase region spans residues 1–225; it reads MNIVILAAGT…EWETLGVNSK (225 aa). Residues 6 to 9, lysine 20, glutamine 71, 76 to 77, 98 to 100, glycine 135, glutamate 150, asparagine 165, and asparagine 223 each bind UDP-N-acetyl-alpha-D-glucosamine; these read LAAG, GT, and YGD. Aspartate 100 serves as a coordination point for Mg(2+). Asparagine 223 lines the Mg(2+) pocket. Residues 226-246 form a linker region; sequence AQLAELERIHQRNVADALLVD. Residues 247 to 453 form an N-acetyltransferase region; that stretch reads GVTLADPARV…GYVRPVKKKS (207 aa). 2 residues coordinate UDP-N-acetyl-alpha-D-glucosamine: arginine 329 and lysine 347. Histidine 359 acts as the Proton acceptor in catalysis. UDP-N-acetyl-alpha-D-glucosamine contacts are provided by tyrosine 362 and asparagine 373. Residues alanine 376, 382 to 383, serine 401, and alanine 419 contribute to the acetyl-CoA site; that span reads NY.

The protein in the N-terminal section; belongs to the N-acetylglucosamine-1-phosphate uridyltransferase family. This sequence in the C-terminal section; belongs to the transferase hexapeptide repeat family. In terms of assembly, homotrimer. Requires Mg(2+) as cofactor.

Its subcellular location is the cytoplasm. The catalysed reaction is alpha-D-glucosamine 1-phosphate + acetyl-CoA = N-acetyl-alpha-D-glucosamine 1-phosphate + CoA + H(+). It catalyses the reaction N-acetyl-alpha-D-glucosamine 1-phosphate + UTP + H(+) = UDP-N-acetyl-alpha-D-glucosamine + diphosphate. Its pathway is nucleotide-sugar biosynthesis; UDP-N-acetyl-alpha-D-glucosamine biosynthesis; N-acetyl-alpha-D-glucosamine 1-phosphate from alpha-D-glucosamine 6-phosphate (route II): step 2/2. The protein operates within nucleotide-sugar biosynthesis; UDP-N-acetyl-alpha-D-glucosamine biosynthesis; UDP-N-acetyl-alpha-D-glucosamine from N-acetyl-alpha-D-glucosamine 1-phosphate: step 1/1. It functions in the pathway bacterial outer membrane biogenesis; LPS lipid A biosynthesis. Its function is as follows. Catalyzes the last two sequential reactions in the de novo biosynthetic pathway for UDP-N-acetylglucosamine (UDP-GlcNAc). The C-terminal domain catalyzes the transfer of acetyl group from acetyl coenzyme A to glucosamine-1-phosphate (GlcN-1-P) to produce N-acetylglucosamine-1-phosphate (GlcNAc-1-P), which is converted into UDP-GlcNAc by the transfer of uridine 5-monophosphate (from uridine 5-triphosphate), a reaction catalyzed by the N-terminal domain. The polypeptide is Bifunctional protein GlmU (Burkholderia orbicola (strain AU 1054)).